The primary structure comprises 495 residues: DDB1- and CUL4-associated factor 4 (495 aa).

The span at 1-17 (MNKSRWQSRRRHGRRSH) shows a compositional bias: basic residues. The tract at residues 1-66 (MNKSRWQSRR…TAGTSSVPEL (66 aa)) is disordered. Residues 24-34 (RLRDSEDRSDS) are compositionally biased toward basic and acidic residues. Low complexity predominate over residues 51 to 62 (PSTSSGTAGTSS). WD repeat units lie at residues 368–407 (FHDS…CVRQ) and 410–451 (GHVN…LLRT).

As to quaternary structure, interacts with DDB1 and CUL4A.

The protein operates within protein modification; protein ubiquitination. Functionally, may function as a substrate receptor for CUL4-DDB1 E3 ubiquitin-protein ligase complex. This Homo sapiens (Human) protein is DDB1- and CUL4-associated factor 4 (DCAF4).